The following is a 208-amino-acid chain: 3-demethoxyubiquinol 3-hydroxylase (208 aa).

E57, E87, H90, E139, E171, and H174 together coordinate Fe cation.

The protein belongs to the COQ7 family. Fe cation serves as cofactor.

It localises to the cell membrane. The catalysed reaction is a 5-methoxy-2-methyl-3-(all-trans-polyprenyl)benzene-1,4-diol + AH2 + O2 = a 3-demethylubiquinol + A + H2O. It functions in the pathway cofactor biosynthesis; ubiquinone biosynthesis. Its function is as follows. Catalyzes the hydroxylation of 2-nonaprenyl-3-methyl-6-methoxy-1,4-benzoquinol during ubiquinone biosynthesis. The chain is 3-demethoxyubiquinol 3-hydroxylase from Nitrosospira multiformis (strain ATCC 25196 / NCIMB 11849 / C 71).